The primary structure comprises 48 residues: Large ribosomal subunit protein bL33B (48 aa).

This sequence belongs to the bacterial ribosomal protein bL33 family.

This is Large ribosomal subunit protein bL33B from Streptococcus thermophilus (strain CNRZ 1066).